A 588-amino-acid polypeptide reads, in one-letter code: Calcium/calmodulin-dependent protein kinase kinase 2 (588 aa).

The span at 1–11 shows a compositional bias: polar residues; it reads MSSCVSSQPTS. Disordered stretches follow at residues 1-34 and 64-147; these read MSSC…KPCE and DLNL…PTVE. Ser-2 is subject to N-acetylserine. Ser-99, Ser-114, Ser-129, Ser-133, and Ser-137 each carry phosphoserine. Positions 101-116 are enriched in polar residues; it reads QEPSQGGPASSSNSLD. Over residues 124–139 the composition is skewed to low complexity; it reads PSLSYSPASSPQSSPR. The 282-residue stretch at 165-446 folds into the Protein kinase domain; it reads YTLKDEIGKG…VPEIKLHPWV (282 aa). ATP contacts are provided by residues 171-179 and Lys-194; that span reads IGKGSYGVV. The tract at residues 204-226 is RP domain; that stretch reads QAGFPRRPPPRGARPAPGGCIQP. The segment at 205-225 is disordered; the sequence is AGFPRRPPPRGARPAPGGCIQ. Residue Asp-312 is the Proton acceptor of the active site. Residues 472 to 477 form an autoinhibitory domain region; it reads ENSVKH. Residues 475-500 are calmodulin-binding; it reads VKHIPSLATVILVKTMIRKRSFGNPF. Residues Ser-495, Ser-511, Thr-522, and Ser-572 each carry the phosphoserine modification. The interval 497–588 is disordered; sequence GNPFEGSRRE…LQPEEVMEPE (92 aa). Positions 521–536 are enriched in basic and acidic residues; it reads PTREWEPLSEPKEARQ. The segment covering 570–580 has biased composition (pro residues); that stretch reads PGSPPRMPPLQ.

The protein belongs to the protein kinase superfamily. Ser/Thr protein kinase family. As to quaternary structure, interacts with calmodulin. Autophosphorylated and phosphorylated by PKA. Each isoform may show a different pattern of phosphorylation. As to expression, expressed in all tissues tested. A differential expression pattern compared to CAMKK1 is observed in the brain.

The protein resides in the nucleus. Its subcellular location is the cytoplasm. The protein localises to the cell projection. It localises to the neuron projection. It catalyses the reaction L-seryl-[protein] + ATP = O-phospho-L-seryl-[protein] + ADP + H(+). It carries out the reaction L-threonyl-[protein] + ATP = O-phospho-L-threonyl-[protein] + ADP + H(+). With respect to regulation, activated by Ca(2+)/calmodulin. Binding of calmodulin may relieve intrasteric autoinhibition. Autophosphorylation does not alter activity or regulation by Ca(2+)/calmodulin. In part, activity is independent on Ca(2+)/calmodulin. Its function is as follows. Calcium/calmodulin-dependent protein kinase belonging to a proposed calcium-triggered signaling cascade involved in a number of cellular processes. Phosphorylates CAMK1, CAMK4 and CAMK1D. Efficiently phosphorylates 5'-AMP-activated protein kinase (AMPK) trimer, including that consisting of PRKAA1, PRKAB1 and PRKAG1. This phosphorylation is stimulated in response to Ca(2+) signals. May play a role in neurite growth. Isoform 2 may promote neurite elongation, while isoform 1 may promoter neurite branching. May be involved in hippocampal activation of CREB1. The protein is Calcium/calmodulin-dependent protein kinase kinase 2 (Camkk2) of Mus musculus (Mouse).